Here is a 441-residue protein sequence, read N- to C-terminus: Transcriptional regulatory protein ZraR (441 aa).

Residues 7 to 121 (DILVVDDDVS…RLQETLEKAL (115 aa)) enclose the Response regulatory domain. Aspartate 56 is modified (4-aspartylphosphate). In terms of domain architecture, Sigma-54 factor interaction spans 141–370 (MIGSSPAMQH…LENAIERAVV (230 aa)). Glycine 172, threonine 173, arginine 329, and arginine 359 together coordinate ATP. The segment at residues 421–440 (KTEAARQLGITRKTLLAKLS) is a DNA-binding region (H-T-H motif).

Post-translationally, phosphorylated by ZraS.

Its subcellular location is the cytoplasm. With respect to regulation, activity of the ZraS/ZraR two-component system is repressed by the zinc-bound form of ZraP, which probably interacts with the periplasmic region of ZraS. Part of the Zra signaling pathway, an envelope stress response (ESR) system composed of the periplasmic accessory protein ZraP, the histidine kinase ZraS and the transcriptional regulator ZraR. The ZraPSR system contributes to antibiotic resistance and is important for membrane integrity in the presence of membrane-targeting biocides. ZraR is a member of the two-component regulatory system ZraS/ZraR. When activated by ZraS, acts in conjunction with sigma-54 to regulate the expression of zraP in the presence of high Zn(2+) or Pb(2+) concentrations. Also positively autoregulates the expression of the zraSR operon. The polypeptide is Transcriptional regulatory protein ZraR (zraR) (Salmonella typhi).